The sequence spans 666 residues: MAQGAVIHVAPEQPTHAVCVVGTATPLDVRGSAPKGYTTFGITASPGVIVDVIHGPPVKKSTMGASKWPLDPELEVTLQVKAASSRTDDEKVRVSYYGPKTSPVQALIYITGVELSLSADVTRTGRVKPAQAGKDQSTWTWGPGGRGAILLVNCDKEDPQASGMDFEDDKILDNKDLQDMSPMTLSTKTPKDFFEKYQLVLEVPKAKMNRVRVFRATRGKLPSRYKVALGPQQFSYCLELPGGQHSTDFYVEGLAFPDADFKGLIPLTISLLDKSNPELPEALVFQDSVTFRVAPWIMTPNTQPPQEVYVCRVSDNEDFLKSLATLTKKAKCKLTVCPEEENIDDQWMQDEMEIGYIQAPHKTLPVVFDSPRDRGLKDFPVKRVMGPNFGYVTRKLYMSELTGLDAFGNLEVSPPVTVRGKEYPLGRILIGNSGYSSSESRDMHQALQDFLSAQQVQAPVRLFSDWLFVGHVDEFLSFVPARDKQGFRLLLSSPRACYQLFQELQSQGHGEATLFEGLKRKRQTINEILSNKKLRDQNAYVESCIDWNRAVLKRELGLAEGDIIDIPQLFKLAGNSRGNSKAQAFFPNMVNMLVLGKYLGIPKPFGPIIDGHCCLEEEVRSHLEPLGLHCTFINDFYTYHVYNGEVHCGTNVRRKPFTFKWWHMVP.

Residues Asn-153, Asp-155, Asp-165, Asp-168, Asp-176, and Asp-179 each coordinate Ca(2+). Citrulline occurs at positions 212 and 218. Gln-349 contributes to the Ca(2+) binding site. Asp-350 is an active-site residue. Residues Glu-351, Glu-353, Asp-369, and Ser-370 each contribute to the Ca(2+) site. 3 positions are modified to citrulline: Arg-372, Arg-374, and Arg-383. Arg-374 is a substrate binding site. 3 residues coordinate Ca(2+): Phe-407, Leu-410, and Glu-411. Residues His-471, Asp-473, and Cys-648 contribute to the active site.

Belongs to the protein arginine deiminase family. The cofactor is Ca(2+). Post-translationally, autocitrullination at Arg-372 and Arg-374 inactivates the enzyme. As to expression, expressed in pluripotent embryonic stem and induced pluripotent stem cells but not multipotent neural stem cells.

The protein resides in the cytoplasm. Its subcellular location is the nucleus. It is found in the cytoplasmic granule. It catalyses the reaction L-arginyl-[protein] + H2O = L-citrullyl-[protein] + NH4(+). Its activity is regulated as follows. Strongly Inhibited by F-amidine and N-alpha-benzoyl-N5-(2-chloro-1-iminoethyl)-L-ornithine amide (Cl-amidine). These inhibitors are however not specific to PADI4 and also inhibit other members of the family. Catalyzes the citrullination/deimination of arginine residues of proteins such as histones, thereby playing a key role in histone code and regulation of stem cell maintenance. Citrullinates histone H1 at 'Arg-54' (to form H1R54ci), histone H3 at 'Arg-2', 'Arg-8', 'Arg-17' and/or 'Arg-26' (to form H3R2ci, H3R8ci, H3R17ci, H3R26ci, respectively) and histone H4 at 'Arg-3' (to form H4R3ci). Acts as a key regulator of stem cell maintenance by mediating citrullination of histone H1: citrullination of 'Arg-54' of histone H1 (H1R54ci) results in H1 displacement from chromatin and global chromatin decondensation, thereby promoting pluripotency and stem cell maintenance. Promotes profound chromatin decondensation during the innate immune response to infection in neutrophils by mediating formation of H1R54ci. Required for the formation of neutrophil extracellular traps (NETs); NETs are mainly composed of DNA fibers and are released by neutrophils to bind pathogens during inflammation. Citrullination of histone H3 prevents their methylation by CARM1 and HRMT1L2/PRMT1 and represses transcription. Citrullinates EP300/P300 at 'Arg-2142', which favors its interaction with NCOA2/GRIP1. This is Protein-arginine deiminase type-4 (Padi4) from Mus musculus (Mouse).